The following is a 374-amino-acid chain: MKSGRYIGVMSGTSLDGVDVVLAAIDENMVAQQASLTWPIPVALKEAILSICQGQQLTLSQLGQLDVKLGALFGEAVLALMHQENLHPQDIVAIGCHGQTVWHEPTGDAPHSLQIGDNNQIVAKTGVTVVGDFRRRDIALGGQGAPLVPAFHEALLAHPVERRMVLNIGGIANLSMLIPGQPVRGYDTGPGNMLMDAWIWRQRRMAYDKDAQWAREGKVIIPLLQTFLSDPYFAAPAPKSTGREYFNYGWLERQLAQFPGLAAQDVQATLVELTAVSISEQVLLSGGCERLLVCGGGSRNPLVMARLAGLLPGTEVTTTDEAGISGDDMEALAFAWLAWRTVAGLQGNLPSVTGAREASVLGAIYPANPRHNQS.

12–19 (GTSLDGVD) is an ATP binding site.

Belongs to the anhydro-N-acetylmuramic acid kinase family.

The catalysed reaction is 1,6-anhydro-N-acetyl-beta-muramate + ATP + H2O = N-acetyl-D-muramate 6-phosphate + ADP + H(+). It participates in amino-sugar metabolism; 1,6-anhydro-N-acetylmuramate degradation. Its pathway is cell wall biogenesis; peptidoglycan recycling. Its function is as follows. Catalyzes the specific phosphorylation of 1,6-anhydro-N-acetylmuramic acid (anhMurNAc) with the simultaneous cleavage of the 1,6-anhydro ring, generating MurNAc-6-P. Is required for the utilization of anhMurNAc either imported from the medium or derived from its own cell wall murein, and thus plays a role in cell wall recycling. In Enterobacter sp. (strain 638), this protein is Anhydro-N-acetylmuramic acid kinase.